A 211-amino-acid polypeptide reads, in one-letter code: Glycerol-3-phosphate acyltransferase (211 aa).

5 consecutive transmembrane segments (helical) span residues 10-30 (FTTW…FGLL), 63-83 (ALTL…IKFL), 90-110 (NIFI…PVWL), 126-146 (LGLY…LFLI), and 152-172 (LSAL…YPYL).

The protein belongs to the PlsY family. In terms of assembly, probably interacts with PlsX.

The protein localises to the cell inner membrane. It catalyses the reaction an acyl phosphate + sn-glycerol 3-phosphate = a 1-acyl-sn-glycero-3-phosphate + phosphate. The protein operates within lipid metabolism; phospholipid metabolism. Its function is as follows. Catalyzes the transfer of an acyl group from acyl-phosphate (acyl-PO(4)) to glycerol-3-phosphate (G3P) to form lysophosphatidic acid (LPA). This enzyme utilizes acyl-phosphate as fatty acyl donor, but not acyl-CoA or acyl-ACP. The chain is Glycerol-3-phosphate acyltransferase from Bartonella henselae (strain ATCC 49882 / DSM 28221 / CCUG 30454 / Houston 1) (Rochalimaea henselae).